Consider the following 206-residue polypeptide: LexA repressor (206 aa).

Positions 29–49 (VREICEAVGLRSTSTVHGHLA) form a DNA-binding region, H-T-H motif. Active-site for autocatalytic cleavage activity residues include Ser130 and Lys167.

It belongs to the peptidase S24 family. In terms of assembly, homodimer.

The catalysed reaction is Hydrolysis of Ala-|-Gly bond in repressor LexA.. Represses a number of genes involved in the response to DNA damage (SOS response), including recA and lexA. In the presence of single-stranded DNA, RecA interacts with LexA causing an autocatalytic cleavage which disrupts the DNA-binding part of LexA, leading to derepression of the SOS regulon and eventually DNA repair. In Alkaliphilus oremlandii (strain OhILAs) (Clostridium oremlandii (strain OhILAs)), this protein is LexA repressor.